The chain runs to 439 residues: MPVSIVIGSQWGDEGKGKIVDLLSPDVDIVARYQGGANAGHTIVWDEEGETEEFVLHLVPSGIFHEGVTCVIGNGVVLDPKAILEEIEKIESLGIDVEGRLKISHNAHLIMPYHKAIEAAQEEDRASASDDDEIGTTGRGIGPAYTDKFARTGIRVVDLLDEDVLRRKLRRSIEEKNAILRDVYDAEALDVDRIVEEYVEFDQKIDDYVTDTSAYLSRALDDGARVLAEGAQGSLLDVDFGSYPYVTSSHPTAGGCCTGLGVSPTEIDRVLGIAKAYCTRVGNGPFPTELDGEVGQALREKGGEFGATTGRPRRCGWLDLVALRYTCMVNGFNELALTKLDILSGIDELKVCTEYRYDGKTTRRFPSEPQNLTRVEPQYETLPGWEADISAVRHVDDLPRAAQDYLAFIENYLDVEIGLVSNGPRRSQIITDVQPMAAA.

Residues 12–18 (GDEGKGK) and 40–42 (GHT) contribute to the GTP site. Catalysis depends on Asp-13, which acts as the Proton acceptor. Positions 13 and 40 each coordinate Mg(2+). IMP is bound by residues 13 to 16 (DEGK), 38 to 41 (NAGH), Thr-137, Arg-151, Gln-232, Thr-247, and Arg-311. His-41 (proton donor) is an active-site residue. Substrate is bound at residue 307-313 (ATTGRPR). Residues Arg-313, 339-341 (KLD), and 421-423 (SNG) each bind GTP.

It belongs to the adenylosuccinate synthetase family. Homodimer. It depends on Mg(2+) as a cofactor.

The protein resides in the cytoplasm. The enzyme catalyses IMP + L-aspartate + GTP = N(6)-(1,2-dicarboxyethyl)-AMP + GDP + phosphate + 2 H(+). The protein operates within purine metabolism; AMP biosynthesis via de novo pathway; AMP from IMP: step 1/2. Plays an important role in the de novo pathway of purine nucleotide biosynthesis. Catalyzes the first committed step in the biosynthesis of AMP from IMP. In Salinibacter ruber (strain DSM 13855 / M31), this protein is Adenylosuccinate synthetase.